A 268-amino-acid polypeptide reads, in one-letter code: 14-3-3-like protein GF14 upsilon (268 aa).

Phosphoserine is present on residues Ser69 and Ser192. The residue at position 213 (Thr213) is a Phosphothreonine. The segment at 243–268 (EAGDDIKEAPKEVQKVDEQAQPPPSQ) is disordered. Over residues 246-260 (DDIKEAPKEVQKVDE) the composition is skewed to basic and acidic residues. Ser267 bears the Phosphoserine mark.

It belongs to the 14-3-3 family. Interacts with EDE1. Interacts with DREB1A and DREB1B in the nucleus. Interacts with CINV1.

The protein resides in the cytoplasm. Its subcellular location is the nucleus. Functionally, is associated with a DNA binding complex that binds to the G box, a well-characterized cis-acting DNA regulatory element found in plant genes. May be involved in cell cycle regulation by binding to soluble EDE1 and sequestering it in an inactive form during the early stages of mitosis. The protein is 14-3-3-like protein GF14 upsilon (GRF5) of Arabidopsis thaliana (Mouse-ear cress).